A 118-amino-acid polypeptide reads, in one-letter code: Large ribosomal subunit protein bL20 (118 aa).

Belongs to the bacterial ribosomal protein bL20 family.

Functionally, binds directly to 23S ribosomal RNA and is necessary for the in vitro assembly process of the 50S ribosomal subunit. It is not involved in the protein synthesizing functions of that subunit. This is Large ribosomal subunit protein bL20 from Salmonella arizonae (strain ATCC BAA-731 / CDC346-86 / RSK2980).